Reading from the N-terminus, the 330-residue chain is Putative [LysW]-L-2-aminoadipate/[LysW]-L-glutamate phosphate reductase (330 aa).

Residues 10-13 and 34-36 each bind NADP(+); these read SGYI and SRK. C142 is an active-site residue. NADP(+) is bound at residue N297.

It belongs to the NAGSA dehydrogenase family. Type 1 subfamily. LysY sub-subfamily.

The protein resides in the cytoplasm. The catalysed reaction is [amino-group carrier protein]-C-terminal-N-(1-carboxy-5-oxopentan-1-yl)-L-glutamine + phosphate + NADP(+) = [amino-group carrier protein]-C-terminal-N-(1-carboxy-5-phosphooxy-5-oxopentan-1-yl)-L-glutamine + NADPH + H(+). It catalyses the reaction [amino-group carrier protein]-C-terminal-gamma-(L-glutamyl-5-semialdehyde)-L-glutamate + phosphate + NADP(+) = [amino-group carrier protein]-C-terminal-gamma-(5-phospho-L-glutamyl)-L-glutamate + NADPH + H(+). It functions in the pathway amino-acid biosynthesis; L-lysine biosynthesis via AAA pathway; L-lysine from L-alpha-aminoadipate (Thermus route): step 3/5. It participates in amino-acid biosynthesis; L-arginine biosynthesis. In terms of biological role, involved in both the arginine and lysine biosynthetic pathways. The polypeptide is Putative [LysW]-L-2-aminoadipate/[LysW]-L-glutamate phosphate reductase (Pyrococcus abyssi (strain GE5 / Orsay)).